The primary structure comprises 302 residues: Lysosomal thioesterase PPT2 (302 aa).

A signal peptide spans 1–27 (MPGLWRQRLPSAWALLLLPFLPLLLPA). Residue Asn60 is glycosylated (N-linked (GlcNAc...) asparagine). 2 disulfides stabilise this stretch: Cys109–Cys117 and Cys165–Cys176. The active-site Nucleophile is the Ser111. N-linked (GlcNAc...) asparagine glycans are attached at residues Asn190 and Asn206. Asp228 is an active-site residue. The N-linked (GlcNAc...) asparagine glycan is linked to Asn245. The cysteines at positions 276 and 296 are disulfide-linked. Residue His283 is part of the active site. N-linked (GlcNAc...) asparagine glycosylation occurs at Asn289.

Belongs to the palmitoyl-protein thioesterase family.

The protein localises to the lysosome. The catalysed reaction is hexadecanoyl-CoA + H2O = hexadecanoate + CoA + H(+). The enzyme catalyses S-hexadecanoyl-N-acetylcysteamine + H2O = N-acetylcysteamine + hexadecanoate + H(+). In terms of biological role, catalyzes the cleavage of thioester bonds from S-palmitoyl-CoA or S-palmitoyl-N-acetylcysteamine (unbranched structures) but does not have activity against palmitoylcysteine or palmitoylated proteins, branched structures or bulky head groups. Conversely, hydrolyzes both long and short chain fatty acyl-CoA substrate. This chain is Lysosomal thioesterase PPT2 (Ppt2), found in Rattus norvegicus (Rat).